A 142-amino-acid polypeptide reads, in one-letter code: Large ribosomal subunit protein uL13 (142 aa).

It belongs to the universal ribosomal protein uL13 family. In terms of assembly, part of the 50S ribosomal subunit.

Its function is as follows. This protein is one of the early assembly proteins of the 50S ribosomal subunit, although it is not seen to bind rRNA by itself. It is important during the early stages of 50S assembly. The chain is Large ribosomal subunit protein uL13 from Thermococcus kodakarensis (strain ATCC BAA-918 / JCM 12380 / KOD1) (Pyrococcus kodakaraensis (strain KOD1)).